The chain runs to 366 residues: Anhydro-N-acetylmuramic acid kinase (366 aa).

Residue 10–17 (GTSMDGID) participates in ATP binding.

This sequence belongs to the anhydro-N-acetylmuramic acid kinase family.

The enzyme catalyses 1,6-anhydro-N-acetyl-beta-muramate + ATP + H2O = N-acetyl-D-muramate 6-phosphate + ADP + H(+). It participates in amino-sugar metabolism; 1,6-anhydro-N-acetylmuramate degradation. Its pathway is cell wall biogenesis; peptidoglycan recycling. Functionally, catalyzes the specific phosphorylation of 1,6-anhydro-N-acetylmuramic acid (anhMurNAc) with the simultaneous cleavage of the 1,6-anhydro ring, generating MurNAc-6-P. Is required for the utilization of anhMurNAc either imported from the medium or derived from its own cell wall murein, and thus plays a role in cell wall recycling. The polypeptide is Anhydro-N-acetylmuramic acid kinase (Legionella pneumophila (strain Paris)).